Consider the following 149-residue polypeptide: Large ribosomal subunit protein bL9 (149 aa).

This sequence belongs to the bacterial ribosomal protein bL9 family.

Functionally, binds to the 23S rRNA. The sequence is that of Large ribosomal subunit protein bL9 from Helicobacter acinonychis (strain Sheeba).